The primary structure comprises 113 residues: Putative pterin-4-alpha-carbinolamine dehydratase (113 aa).

The protein belongs to the pterin-4-alpha-carbinolamine dehydratase family.

The enzyme catalyses (4aS,6R)-4a-hydroxy-L-erythro-5,6,7,8-tetrahydrobiopterin = (6R)-L-erythro-6,7-dihydrobiopterin + H2O. This Saccharophagus degradans (strain 2-40 / ATCC 43961 / DSM 17024) protein is Putative pterin-4-alpha-carbinolamine dehydratase.